A 297-amino-acid chain; its full sequence is 2-dehydropantoate 2-reductase (297 aa).

NADP(+) is bound by residues 11–16 (GAGAMG), N107, and A133. N107 is a substrate binding site. The active-site Proton donor is K187. Positions 191, 195, 205, and 251 each coordinate substrate. Residue E263 coordinates NADP(+).

The protein belongs to the ketopantoate reductase family.

It is found in the cytoplasm. The catalysed reaction is (R)-pantoate + NADP(+) = 2-dehydropantoate + NADPH + H(+). It participates in cofactor biosynthesis; (R)-pantothenate biosynthesis; (R)-pantoate from 3-methyl-2-oxobutanoate: step 2/2. In terms of biological role, catalyzes the NADPH-dependent reduction of ketopantoate into pantoic acid. The chain is 2-dehydropantoate 2-reductase from Listeria monocytogenes serovar 1/2a (strain ATCC BAA-679 / EGD-e).